The sequence spans 403 residues: MKFIDESLIRIEAGDGGNGCVSFRREKFIPKGGPDGGDGGDGGDVYLQADENLNTLIDYRFNKRFAAERGENGRSSDCTGRRGKDIILPVPVGTRAIDNDTKETLGDLTQHGQKMLVAKGGYHGLGNTRFKSSVNRAPRQKTMGTPGEKRDLLLELMLLADVGMLGFPNAGKSTFIRAVSAAKPKVADYPFTTLVPSLGVVKVDDSHSFVVADIPGLIEGAADGAGLGIRFLKHLERCRVLIHLVDIAPIDGSNPADNVAIIESELFQYSEKLSEKPRWLVFNKIDTMSDEEAEERVREITEQLGWEEDYYLISAATGKNVPPLCRDIMDFIIANPREAETQQVAPEEIKFKWEDYHQEQLAEYQFDDDEDWDDDWTEEDDDEDWDDDWSEEDDEGIEFIYKP.

The 159-residue stretch at 1 to 159 (MKFIDESLIR…RDLLLELMLL (159 aa)) folds into the Obg domain. The OBG-type G domain occupies 160–333 (ADVGMLGFPN…LCRDIMDFII (174 aa)). GTP is bound by residues 166 to 173 (GFPNAGKS), 191 to 195 (FTTLV), 213 to 216 (DIPG), 283 to 286 (NKID), and 314 to 316 (SAA). Mg(2+) is bound by residues serine 173 and threonine 193. A disordered region spans residues 364–403 (YQFDDDEDWDDDWTEEDDDEDWDDDWSEEDDEGIEFIYKP). Over residues 365–397 (QFDDDEDWDDDWTEEDDDEDWDDDWSEEDDEGI) the composition is skewed to acidic residues.

This sequence belongs to the TRAFAC class OBG-HflX-like GTPase superfamily. OBG GTPase family. In terms of assembly, monomer. The cofactor is Mg(2+).

It is found in the cytoplasm. Functionally, an essential GTPase which binds GTP, GDP and possibly (p)ppGpp with moderate affinity, with high nucleotide exchange rates and a fairly low GTP hydrolysis rate. Plays a role in control of the cell cycle, stress response, ribosome biogenesis and in those bacteria that undergo differentiation, in morphogenesis control. This Haemophilus influenzae (strain PittGG) protein is GTPase Obg.